The following is a 112-amino-acid chain: ATP synthase epsilon chain (112 aa).

The protein belongs to the ATPase epsilon chain family. As to quaternary structure, F-type ATPases have 2 components, CF(1) - the catalytic core - and CF(0) - the membrane proton channel. CF(1) has five subunits: alpha(3), beta(3), gamma(1), delta(1), epsilon(1). CF(0) has three main subunits: a, b and c.

It localises to the cell inner membrane. Produces ATP from ADP in the presence of a proton gradient across the membrane. The chain is ATP synthase epsilon chain (atpC) from Rickettsia conorii (strain ATCC VR-613 / Malish 7).